The primary structure comprises 345 residues: tRNA N6-adenosine threonylcarbamoyltransferase (345 aa).

Fe cation-binding residues include His-111 and His-115. Substrate is bound by residues 134–138 (LVSGG), Asp-167, Gly-180, and Asn-277. Asp-305 serves as a coordination point for Fe cation.

Belongs to the KAE1 / TsaD family. Requires Fe(2+) as cofactor.

The protein localises to the cytoplasm. It catalyses the reaction L-threonylcarbamoyladenylate + adenosine(37) in tRNA = N(6)-L-threonylcarbamoyladenosine(37) in tRNA + AMP + H(+). Functionally, required for the formation of a threonylcarbamoyl group on adenosine at position 37 (t(6)A37) in tRNAs that read codons beginning with adenine. Is involved in the transfer of the threonylcarbamoyl moiety of threonylcarbamoyl-AMP (TC-AMP) to the N6 group of A37, together with TsaE and TsaB. TsaD likely plays a direct catalytic role in this reaction. The polypeptide is tRNA N6-adenosine threonylcarbamoyltransferase (Laribacter hongkongensis (strain HLHK9)).